The primary structure comprises 307 residues: Glutenin, low molecular weight subunit 1D1 (307 aa).

The N-terminal stretch at 1-23 (MKTFLVFALLAVAATSAIAQMET) is a signal peptide. 2 disordered regions span residues 31–88 (RPWQ…ILPQ) and 105–126 (PFSQ…QQQQ). Residues 43 to 88 (TFPQQPLFSQQQQQQLFPQQPSFSQQQPPFWQQQPPFSQQQPILPQ) show a composition bias toward low complexity.

It belongs to the gliadin/glutenin family. In terms of assembly, disulfide-bridge linked aggregates. As to expression, expressed in endosperm, but not in husk and leaf tissues.

Functionally, glutenins are high-molecular weight seed storage proteins of wheat endosperm. Thought to be responsible for the visco-elastic property of wheat dough. In Triticum aestivum (Wheat), this protein is Glutenin, low molecular weight subunit 1D1.